A 264-amino-acid chain; its full sequence is Chanoclavine-I dehydrogenase easD (264 aa).

An N-terminal signal peptide occupies residues 1-20 (MASVSSKIFAITGGASGIGA). 6 residues coordinate NADP(+): I18, D66, R132, Y169, K173, and T204. Residue Y169 is the Proton donor of the active site. Residue K173 is the Lowers pKa of active site Tyr of the active site.

Belongs to the short-chain dehydrogenases/reductases (SDR) family. Homotetramer.

The enzyme catalyses chanoclavine-I + NAD(+) = chanoclavine-I aldehyde + NADH + H(+). Its pathway is alkaloid biosynthesis; ergot alkaloid biosynthesis. Its function is as follows. Chanoclavine-I dehydrogenase; part of the gene cluster that mediates the biosynthesis of fungal ergot alkaloid. DmaW catalyzes the first step of ergot alkaloid biosynthesis by condensing dimethylallyl diphosphate (DMAP) and tryptophan to form 4-dimethylallyl-L-tryptophan. The second step is catalyzed by the methyltransferase easF that methylates 4-dimethylallyl-L-tryptophan in the presence of S-adenosyl-L-methionine, resulting in the formation of 4-dimethylallyl-L-abrine. The catalase easC and the FAD-dependent oxidoreductase easE then transform 4-dimethylallyl-L-abrine to chanoclavine-I which is further oxidized by easD in the presence of NAD(+), resulting in the formation of chanoclavine-I aldehyde. Chanoclavine-I aldehyde is the precursor of ergoamides and ergopeptines in Clavicipitaceae, and clavine-type alcaloids such as fumiclavine in Trichocomaceae. However, the metabolites downstream of chanoclavine-I aldehyde in Arthrodermataceae have not been identified yet. The polypeptide is Chanoclavine-I dehydrogenase easD (Arthroderma otae (strain ATCC MYA-4605 / CBS 113480) (Microsporum canis)).